Reading from the N-terminus, the 772-residue chain is UDP-N-acetylmuramoyl-L-alanyl-D-glutamate--2,6-diaminopimelate ligase MurE homolog, chloroplastic (772 aa).

Residues 1–40 (MAFTFLSPHPVFLSLTGTTSSFSYKPVLLPFSRNSRTLTV) constitute a chloroplast transit peptide. Disordered regions lie at residues 42 to 87 (AGPA…KLEE) and 141 to 168 (LLKP…DVTD). Composition is skewed to acidic residues over residues 54-63 (ADDDPPEAPE) and 158-168 (EGNEEEGDVTD). Phosphoserine is present on serine 194.

It belongs to the MurCDEF family. MurE subfamily. Component of the plastid-encoded plastid RNA polymerase (PEP) complex. In terms of tissue distribution, expressed in leaves and flowers.

Its subcellular location is the plastid. It localises to the chloroplast. Its function is as follows. Involved in chloroplast biogenesis. Required for thylakoid membrane development. Seems to be required for plastid-encoded plastid RNA polymerase (PEP)-dependent gene expression. This chain is UDP-N-acetylmuramoyl-L-alanyl-D-glutamate--2,6-diaminopimelate ligase MurE homolog, chloroplastic, found in Arabidopsis thaliana (Mouse-ear cress).